The following is a 257-amino-acid chain: Dihydroorotate dehydrogenase B (NAD(+)), electron transfer subunit (257 aa).

The 101-residue stretch at 2 to 102 (IGRERMTVAS…LGPLGNGFPL (101 aa)) folds into the FAD-binding FR-type domain. Residues 53 to 56 (RPLS), 70 to 72 (IYR), and 77 to 78 (GT) each bind FAD. Residues C221, C226, C229, and C244 each contribute to the [2Fe-2S] cluster site.

Belongs to the PyrK family. Heterotetramer of 2 PyrK and 2 PyrD type B subunits. The cofactor is [2Fe-2S] cluster. FAD is required as a cofactor.

It functions in the pathway pyrimidine metabolism; UMP biosynthesis via de novo pathway; orotate from (S)-dihydroorotate (NAD(+) route): step 1/1. Responsible for channeling the electrons from the oxidation of dihydroorotate from the FMN redox center in the PyrD type B subunit to the ultimate electron acceptor NAD(+). The chain is Dihydroorotate dehydrogenase B (NAD(+)), electron transfer subunit from Geobacillus kaustophilus (strain HTA426).